A 465-amino-acid polypeptide reads, in one-letter code: Chromosomal replication initiator protein DnaA (465 aa).

Residues 1 to 84 (MSLSLWQQCL…RFEVGSKPLV (84 aa)) form a domain I, interacts with DnaA modulators region. The domain II stretch occupies residues 84-128 (VQAISQPAQPHHKQVSAAPQQQVRSAPVRPSWDNSPAQAEHTYRS). Positions 91–120 (AQPHHKQVSAAPQQQVRSAPVRPSWDNSPA) are disordered. The tract at residues 129–345 (NVNPKHTFDN…GALNRVIANA (217 aa)) is domain III, AAA+ region. ATP contacts are provided by Gly173, Gly175, Lys176, and Thr177. The interval 346–465 (NFTGRSITID…FSNLIRTLSS (120 aa)) is domain IV, binds dsDNA.

Belongs to the DnaA family. As to quaternary structure, oligomerizes as a right-handed, spiral filament on DNA at oriC.

The protein resides in the cytoplasm. In terms of biological role, plays an essential role in the initiation and regulation of chromosomal replication. ATP-DnaA binds to the origin of replication (oriC) to initiate formation of the DNA replication initiation complex once per cell cycle. Binds the DnaA box (a 9 base pair repeat at the origin) and separates the double-stranded (ds)DNA. Forms a right-handed helical filament on oriC DNA; dsDNA binds to the exterior of the filament while single-stranded (ss)DNA is stabiized in the filament's interior. The ATP-DnaA-oriC complex binds and stabilizes one strand of the AT-rich DNA unwinding element (DUE), permitting loading of DNA polymerase. After initiation quickly degrades to an ADP-DnaA complex that is not apt for DNA replication. Binds acidic phospholipids. This chain is Chromosomal replication initiator protein DnaA, found in Pectobacterium carotovorum subsp. carotovorum (strain PC1).